Here is a 310-residue protein sequence, read N- to C-terminus: Methionyl-tRNA formyltransferase (310 aa).

Position 111-114 (111-114) interacts with (6S)-5,6,7,8-tetrahydrofolate; it reads SLLP.

This sequence belongs to the Fmt family.

It catalyses the reaction L-methionyl-tRNA(fMet) + (6R)-10-formyltetrahydrofolate = N-formyl-L-methionyl-tRNA(fMet) + (6S)-5,6,7,8-tetrahydrofolate + H(+). Functionally, attaches a formyl group to the free amino group of methionyl-tRNA(fMet). The formyl group appears to play a dual role in the initiator identity of N-formylmethionyl-tRNA by promoting its recognition by IF2 and preventing the misappropriation of this tRNA by the elongation apparatus. The protein is Methionyl-tRNA formyltransferase of Rhodopseudomonas palustris (strain BisB5).